Reading from the N-terminus, the 89-residue chain is Small ribosomal subunit protein uS15 (89 aa).

The protein belongs to the universal ribosomal protein uS15 family. As to quaternary structure, part of the 30S ribosomal subunit. Forms a bridge to the 50S subunit in the 70S ribosome, contacting the 23S rRNA.

Functionally, one of the primary rRNA binding proteins, it binds directly to 16S rRNA where it helps nucleate assembly of the platform of the 30S subunit by binding and bridging several RNA helices of the 16S rRNA. Forms an intersubunit bridge (bridge B4) with the 23S rRNA of the 50S subunit in the ribosome. This is Small ribosomal subunit protein uS15 from Pseudarthrobacter chlorophenolicus (strain ATCC 700700 / DSM 12829 / CIP 107037 / JCM 12360 / KCTC 9906 / NCIMB 13794 / A6) (Arthrobacter chlorophenolicus).